We begin with the raw amino-acid sequence, 242 residues long: Succinyl-CoA:3-ketoacid coenzyme A transferase subunit A (242 aa).

33–39 lines the CoA pocket; that stretch reads GGFGLCG.

It belongs to the 3-oxoacid CoA-transferase subunit A family. As to quaternary structure, heterodimer of a subunit A and a subunit B.

It catalyses the reaction a 3-oxo acid + succinyl-CoA = a 3-oxoacyl-CoA + succinate. Its pathway is bacterial outer membrane biogenesis; lipopolysaccharide biosynthesis. This is Succinyl-CoA:3-ketoacid coenzyme A transferase subunit A (lpsI) from Xanthomonas campestris pv. campestris (strain ATCC 33913 / DSM 3586 / NCPPB 528 / LMG 568 / P 25).